The primary structure comprises 200 residues: Ribosomal RNA large subunit methyltransferase E (200 aa).

Gly-51, Trp-53, Asp-71, Asp-90, and Asp-112 together coordinate S-adenosyl-L-methionine. The active-site Proton acceptor is the Lys-151.

It belongs to the class I-like SAM-binding methyltransferase superfamily. RNA methyltransferase RlmE family.

It is found in the cytoplasm. The catalysed reaction is uridine(2552) in 23S rRNA + S-adenosyl-L-methionine = 2'-O-methyluridine(2552) in 23S rRNA + S-adenosyl-L-homocysteine + H(+). Its function is as follows. Specifically methylates the uridine in position 2552 of 23S rRNA at the 2'-O position of the ribose in the fully assembled 50S ribosomal subunit. The polypeptide is Ribosomal RNA large subunit methyltransferase E (Treponema pallidum (strain Nichols)).